Here is a 461-residue protein sequence, read N- to C-terminus: Argininosuccinate lyase (461 aa).

It belongs to the lyase 1 family. Argininosuccinate lyase subfamily.

The protein resides in the cytoplasm. It catalyses the reaction 2-(N(omega)-L-arginino)succinate = fumarate + L-arginine. It functions in the pathway amino-acid biosynthesis; L-arginine biosynthesis; L-arginine from L-ornithine and carbamoyl phosphate: step 3/3. The polypeptide is Argininosuccinate lyase (Streptococcus gordonii (strain Challis / ATCC 35105 / BCRC 15272 / CH1 / DL1 / V288)).